We begin with the raw amino-acid sequence, 82 residues long: U6 snRNA-associated Sm-like protein LSm6 (82 aa).

The 70-residue stretch at 13–82 (DPSGFLSEII…GNNVMYISAD (70 aa)) folds into the Sm domain.

The protein belongs to the snRNP Sm proteins family. SmF/LSm6 subfamily. In terms of assembly, component of the heptameric LSM1-LSM7 complex, which consists of snr-1/lsm1, snr-2/lsm2, snr-3/lsm3, snr-4/lsm4, snr-5/lsm5, snr-6/lsm6 and snr-7/lsm7. Component of the heptameric LSM2-LSM8 complex, which consists of snr-2/lsm2, snr-3/lsm3, snr-4/lsm4, snr-5/lsm5, snr-6/lsm6, snr-7/lsm7 and snr-8/lsm8. The LSm subunits form a seven-membered ring structure with a doughnut shape.

It is found in the cytoplasm. The protein localises to the nucleus. Functionally, component of LSm protein complexes, which are involved in RNA processing and may function in a chaperone-like manner, facilitating the efficient association of RNA processing factors with their substrates. Component of the cytoplasmic LSM1-LSM7 complex, which is thought to be involved in mRNA degradation by activating the decapping step in the 5'-to-3' mRNA decay pathway. Component of the nuclear LSM2-LSM8 complex, which is involved in splicing of nuclear mRNAs. LSM2-LSM8 associates with multiple snRNP complexes containing the U6 snRNA (U4/U6 di-snRNP, spliceosomal U4/U6.U5 tri-snRNP, and free U6 snRNP). It binds directly to the 3'-terminal U-tract of U6 snRNA and plays a role in the biogenesis and stability of the U6 snRNP and U4/U6 snRNP complexes. LSM2-LSM8 probably also is involved degradation of nuclear pre-mRNA by targeting them for decapping, and in processing of pre-tRNAs, pre-rRNAs and U3 snoRNA. This chain is U6 snRNA-associated Sm-like protein LSm6 (snr-6), found in Neurospora crassa (strain ATCC 24698 / 74-OR23-1A / CBS 708.71 / DSM 1257 / FGSC 987).